A 485-amino-acid chain; its full sequence is Glutamate--tRNA ligase (485 aa).

Residues 12-22 (PSPTGEPHVGT) carry the 'HIGH' region motif. The 'KMSKS' region motif lies at 253–257 (KLSKR). K256 contributes to the ATP binding site.

The protein belongs to the class-I aminoacyl-tRNA synthetase family. Glutamate--tRNA ligase type 1 subfamily. As to quaternary structure, monomer.

It is found in the cytoplasm. The catalysed reaction is tRNA(Glu) + L-glutamate + ATP = L-glutamyl-tRNA(Glu) + AMP + diphosphate. Functionally, catalyzes the attachment of glutamate to tRNA(Glu) in a two-step reaction: glutamate is first activated by ATP to form Glu-AMP and then transferred to the acceptor end of tRNA(Glu). This Rhizobium meliloti (strain 1021) (Ensifer meliloti) protein is Glutamate--tRNA ligase.